The sequence spans 547 residues: Protein RBL (547 aa).

WD repeat units follow at residues 21–60 (LEHGVIKCVAFNHRGSLLAAGCADGGCVIWDFETRGIAKE), 65–104 (DCSAAITSVSWSKYGHRLLVSAADKSLTLWDVSTGEKIAR), 214–253 (SGAAPVKNIVFSRNGQYLLTNSHDRTIRIYENLLPAKNVL), 285–332 (EFQD…VKIL), and 334–373 (GPKEALIDLAWHPVHPIIVSVSLAGLVYIWAKDYTENWSA). Residues 466 to 547 (SPASEEAGQN…GGDDDDDAYY (82 aa)) are disordered. The segment covering 499 to 511 (SEKAMELQAEKAK) has biased composition (basic and acidic residues). The segment covering 530–547 (QETDDSINGGDDDDDAYY) has biased composition (acidic residues).

In terms of assembly, part of a complex composed of TRO, RBL and WDR5A. Interacts with TRO and WDR5A, but not with WDR5B. This complex is formed during both vegetative and reproductive development. Strongly expressed in root tips, shoot apices, vascular tissues, developing embryos and endosperms.

The protein localises to the nucleus. Its function is as follows. Promotes the expression of FLC and FLC homologs to repress the floral transition. Promotes WRKY70 and LTP7 genes epigenetic methylation (e.g. H3K4me3) and subsequent expression. In Arabidopsis thaliana (Mouse-ear cress), this protein is Protein RBL.